A 198-amino-acid chain; its full sequence is Inositol diphosphatase DSP4 (198 aa).

The segment at Met-1–Arg-23 is disordered. The 155-residue stretch at Asn-34–Cys-188 folds into the Tyrosine-protein phosphatase domain. Positions Phe-90–Ile-102 are WPD loop important for active site topology. Residues Asn-101 and Ile-102 each contribute to the 1D-myo-inositol hexakisphosphate site. Cys-126 serves as the catalytic Phosphocysteine intermediate.

It belongs to the protein-tyrosine phosphatase family. Atypical dual-specificity phosphatase Siw14-like subfamily. Highly expressed in flowers and at lower levels in roots, leaves, stems and siliques.

It carries out the reaction 5-diphospho-1D-myo-inositol 1,2,3,4,6-pentakisphosphate + H2O = 1D-myo-inositol hexakisphosphate + phosphate + H(+). It catalyses the reaction 1,5-bis(diphospho)-1D-myo-inositol 2,3,4,6-tetrakisphosphate + H2O = 1-diphospho-1D-myo-inositol 2,3,4,5,6-pentakisphosphate + phosphate + 2 H(+). The enzyme catalyses 3,5-bis(diphospho)-1D-myo-inositol 1,2,4,6-tetrakisphosphate + H2O = 3-diphospho-1D-myo-inositol 1,2,4,5,6-pentakisphosphate + phosphate + 2 H(+). The catalysed reaction is 6-diphospho-1D-myo-inositol pentakisphosphate + H2O = 1D-myo-inositol hexakisphosphate + phosphate + H(+). Cleaves the beta-phosphate at the 5-position of soluble inositol pyrophosphates. Has highest activity on 5-diphosphoinositol 1,2,3,4,6-pentakisphosphate (5-InsP(7)), 1,5-bis-diphosphoinositol 2,3,4,6-tetrakisphosphate (1,5-InsP(8)) and 3,5-InsP(8). Acts as a negative regulator of defense responses against the bacterial pathogen Pseudomonas syringae pv tomato strain DC3000. This is Inositol diphosphatase DSP4 from Arabidopsis thaliana (Mouse-ear cress).